We begin with the raw amino-acid sequence, 177 residues long: Putative fimbrin-like protein FimI (177 aa).

Residues 1–19 (MIRKGAALVGLVLMSPVIA) form the signal peptide. Residues Cys-40 and Cys-81 are joined by a disulfide bond.

This sequence belongs to the fimbrial protein family.

It is found in the fimbrium. This chain is Putative fimbrin-like protein FimI (fimI), found in Salmonella typhi.